Consider the following 597-residue polypeptide: Coronatine-insensitive protein homolog 1b (597 aa).

One can recognise an F-box domain in the interval 22–64 (SIPEEALHLVLGYVDDPRDREAVSLVCRRWHRIDALTRKHVTV). Positions 92, 353, 391, 414, and 501 each coordinate jasmonate.

In terms of assembly, interacts with TIFY10C/JAZ8 in a coronatine-dependent manner. Interacts with TIFY3/JAZ1, TIFY6A/JAZ3, TIFY6B/JAZ4, TIFY10A/JAZ6, TIFY10B/JAZ7, TIFY11A/JAZ9, TIFY11B/JAZ10, TIFY11C/JAZ11 and TIFY11D/JAZ12 in a coronatine-dependent manner. As to expression, expressed in roots, shoots, leaf sheaths and leaf blades.

Its function is as follows. Involved in jasmonate (JA) signaling. Required for jasmonate signaling in plant defense responses. Can complement Arabidopsis coi1-1 mutant and restore jasmonate signaling. Component of SCF(COI1) E3 ubiquitin ligase complexes, which may mediate the ubiquitination and subsequent proteasomal degradation of target proteins, including TIFY/JAZ family. The polypeptide is Coronatine-insensitive protein homolog 1b (Oryza sativa subsp. japonica (Rice)).